The sequence spans 135 residues: Small ribosomal subunit protein uS12 (135 aa).

Aspartate 89 carries the post-translational modification 3-methylthioaspartic acid. A disordered region spans residues 106-135 (GVKDRKQGRSKYGAKRPKPGQAPAAAGKKK). Residues 113–123 (GRSKYGAKRPK) show a composition bias toward basic residues. The span at 124–135 (PGQAPAAAGKKK) shows a compositional bias: low complexity.

The protein belongs to the universal ribosomal protein uS12 family. As to quaternary structure, part of the 30S ribosomal subunit. Contacts proteins S8 and S17. May interact with IF1 in the 30S initiation complex.

In terms of biological role, with S4 and S5 plays an important role in translational accuracy. Functionally, interacts with and stabilizes bases of the 16S rRNA that are involved in tRNA selection in the A site and with the mRNA backbone. Located at the interface of the 30S and 50S subunits, it traverses the body of the 30S subunit contacting proteins on the other side and probably holding the rRNA structure together. The combined cluster of proteins S8, S12 and S17 appears to hold together the shoulder and platform of the 30S subunit. This is Small ribosomal subunit protein uS12 from Synechococcus sp. (strain JA-3-3Ab) (Cyanobacteria bacterium Yellowstone A-Prime).